Consider the following 259-residue polypeptide: tRNA (guanine-N(7)-)-methyltransferase (259 aa).

Residues glycine 80, glutamate 103–leucine 104, asparagine 136–serine 137, and leucine 156 each bind S-adenosyl-L-methionine. Aspartate 159 is a catalytic residue. Threonine 234–glutamate 236 provides a ligand contact to S-adenosyl-L-methionine.

The protein belongs to the class I-like SAM-binding methyltransferase superfamily. TrmB family.

Its subcellular location is the nucleus. It carries out the reaction guanosine(46) in tRNA + S-adenosyl-L-methionine = N(7)-methylguanosine(46) in tRNA + S-adenosyl-L-homocysteine. It participates in tRNA modification; N(7)-methylguanine-tRNA biosynthesis. Its function is as follows. Catalyzes the formation of N(7)-methylguanine at position 46 (m7G46) in tRNA. The sequence is that of tRNA (guanine-N(7)-)-methyltransferase from Oryza sativa subsp. indica (Rice).